We begin with the raw amino-acid sequence, 102 residues long: Gastrin/cholecystokinin-like peptide (102 aa).

Positions 1–20 are cleaved as a signal peptide; that stretch reads MDKKVCVSILLAMLAIAALC. Positions 21 to 45 are excised as a propeptide; that stretch reads RPMTELESARHGAQRKNSISDVSRR. Sulfotyrosine is present on Tyr86. Phenylalanine amide is present on Phe92. A propeptide spanning residues 96–102 is cleaved from the precursor; the sequence is SSEVTES.

This sequence belongs to the gastrin/cholecystokinin family. In terms of tissue distribution, expressed in antrum, duodenum, colon, pancreas, brain and testis. No expression found in kidney, lung, liver, skin or distal two-thirds of small intestine. In the brain, strongly expressed in the pituitary gland with moderate expression in the neural lobe, brain stem and hypothalamus.

Its subcellular location is the secreted. In terms of biological role, may control digestion processes. The protein is Gastrin/cholecystokinin-like peptide (GAST) of Aquarana catesbeiana (American bullfrog).